We begin with the raw amino-acid sequence, 499 residues long: MSKQFILAIDQGTTSSRAIIFDKKGNIKKIAQKEFTQIYPKSGWVEHDPMEIWASQSSIVREALEYARVSPRDIAAIGITNQRETTVVWDKNTGQPVYNAIVWQCRRTSHICDEINKNEDLKKYIRKNTGLIVDAYFSATKIKWILDNVDGAREKAEKGDLLFGTIDTWLIWNLTKGEVHATDFSNASRTMLFNINTLEWDKKILEYLDIPVSMLPEVRSSSGDFGHTHPSTLGGARIPIAGVAGDQQSALFGHCCFEEGMAKNTYGTGCFALMNVGDKPVFSDAGLLTTIAWAEDGKPTYALEGSVFIAGAVIQWIRDGLGLVRSAEDSEYYATKIDSTDGVYLVPAFVGLGTPYWDMYARGTIVGITRDTRREHIIRAALEAIAYQAKDVLDCMKEDTGLDWAGLRVDGGAVQNNFLMQFQSDILQSEISKPKINEITGLGAVFLAGLAVGFWKDKEELKTILTTEKTFEPKKDPETVAHDYKGWKKAVQRSMAWAE.

Residue threonine 13 participates in ADP binding. 3 residues coordinate ATP: threonine 13, threonine 14, and serine 15. Residue threonine 13 participates in sn-glycerol 3-phosphate binding. Residue arginine 17 participates in ADP binding. Sn-glycerol 3-phosphate is bound by residues arginine 83, glutamate 84, tyrosine 136, and aspartate 246. Glycerol-binding residues include arginine 83, glutamate 84, tyrosine 136, aspartate 246, and glutamine 247. ADP-binding residues include threonine 268 and glycine 311. ATP-binding residues include threonine 268, glycine 311, glutamine 315, and glycine 412. Glycine 412 and asparagine 416 together coordinate ADP.

It belongs to the FGGY kinase family.

The enzyme catalyses glycerol + ATP = sn-glycerol 3-phosphate + ADP + H(+). It participates in polyol metabolism; glycerol degradation via glycerol kinase pathway; sn-glycerol 3-phosphate from glycerol: step 1/1. Its activity is regulated as follows. Inhibited by fructose 1,6-bisphosphate (FBP). Key enzyme in the regulation of glycerol uptake and metabolism. Catalyzes the phosphorylation of glycerol to yield sn-glycerol 3-phosphate. This chain is Glycerol kinase, found in Francisella philomiragia subsp. philomiragia (strain ATCC 25017 / CCUG 19701 / FSC 153 / O#319-036).